The following is a 297-amino-acid chain: UDP-N-acetylenolpyruvoylglucosamine reductase (297 aa).

The FAD-binding PCMH-type domain maps to 26-191 (QTGGPAEYLA…IAATFALKAG (166 aa)). R170 is a catalytic residue. Catalysis depends on S220, which acts as the Proton donor. Residue E290 is part of the active site.

The protein belongs to the MurB family. FAD is required as a cofactor.

It localises to the cytoplasm. The catalysed reaction is UDP-N-acetyl-alpha-D-muramate + NADP(+) = UDP-N-acetyl-3-O-(1-carboxyvinyl)-alpha-D-glucosamine + NADPH + H(+). Its pathway is cell wall biogenesis; peptidoglycan biosynthesis. Functionally, cell wall formation. The sequence is that of UDP-N-acetylenolpyruvoylglucosamine reductase from Lactobacillus delbrueckii subsp. bulgaricus (strain ATCC 11842 / DSM 20081 / BCRC 10696 / JCM 1002 / NBRC 13953 / NCIMB 11778 / NCTC 12712 / WDCM 00102 / Lb 14).